The primary structure comprises 333 residues: DNA-directed RNA polymerase subunit alpha (333 aa).

The alpha N-terminal domain (alpha-NTD) stretch occupies residues 1 to 233 (MVREKIRVST…DLFIPFLHAE (233 aa)). Residues 269 to 333 (IALKYIFIDQ…DILEMEKNFA (65 aa)) form an alpha C-terminal domain (alpha-CTD) region.

It belongs to the RNA polymerase alpha chain family. As to quaternary structure, in plastids the minimal PEP RNA polymerase catalytic core is composed of four subunits: alpha, beta, beta', and beta''. When a (nuclear-encoded) sigma factor is associated with the core the holoenzyme is formed, which can initiate transcription.

The protein localises to the plastid. Its subcellular location is the chloroplast. It carries out the reaction RNA(n) + a ribonucleoside 5'-triphosphate = RNA(n+1) + diphosphate. In terms of biological role, DNA-dependent RNA polymerase catalyzes the transcription of DNA into RNA using the four ribonucleoside triphosphates as substrates. This chain is DNA-directed RNA polymerase subunit alpha, found in Cucumis sativus (Cucumber).